The sequence spans 316 residues: Pantothenate kinase (316 aa).

Residue 96–103 participates in ATP binding; that stretch reads GSVAVGKS.

It belongs to the prokaryotic pantothenate kinase family.

It localises to the cytoplasm. It catalyses the reaction (R)-pantothenate + ATP = (R)-4'-phosphopantothenate + ADP + H(+). It participates in cofactor biosynthesis; coenzyme A biosynthesis; CoA from (R)-pantothenate: step 1/5. The protein is Pantothenate kinase of Shouchella clausii (strain KSM-K16) (Alkalihalobacillus clausii).